The sequence spans 251 residues: uncharacterized protein (251 aa).

This sequence belongs to the methyltransferase superfamily.

Its subcellular location is the cytoplasm. It is found in the nucleus. Functionally, probable methyltransferase. This is an uncharacterized protein from Schizosaccharomyces pombe (strain 972 / ATCC 24843) (Fission yeast).